The primary structure comprises 154 residues: General odorant-binding protein 83a (154 aa).

A signal peptide spans 1–33 (MALNGFGRRVSASVLLIALSLLSGALILPPAAA). Intrachain disulfides connect Cys-55/Cys-86, Cys-82/Cys-133, and Cys-124/Cys-142.

The protein belongs to the PBP/GOBP family. As to expression, in the ventrolateral region of the antenna, expressed in two distinct types of olfactory hairs: in most sensilla trichodea and in a subset of the small sensilla basiconica (at protein level).

It localises to the secreted. The chain is General odorant-binding protein 83a (Obp83a) from Drosophila melanogaster (Fruit fly).